The chain runs to 271 residues: ATP synthase subunit a (271 aa).

5 helical membrane passes run 38–58, 100–120, 146–166, 220–240, and 242–262; these read FWTL…LFLL, LIAP…LMDL, DVNI…FYSI, LIFI…LNVP, and AIFH…LTIV.

Belongs to the ATPase A chain family. F-type ATPases have 2 components, CF(1) - the catalytic core - and CF(0) - the membrane proton channel. CF(1) has five subunits: alpha(3), beta(3), gamma(1), delta(1), epsilon(1). CF(0) has three main subunits: a(1), b(2) and c(9-12). The alpha and beta chains form an alternating ring which encloses part of the gamma chain. CF(1) is attached to CF(0) by a central stalk formed by the gamma and epsilon chains, while a peripheral stalk is formed by the delta and b chains.

It localises to the cell inner membrane. In terms of biological role, key component of the proton channel; it plays a direct role in the translocation of protons across the membrane. The chain is ATP synthase subunit a from Citrobacter koseri (strain ATCC BAA-895 / CDC 4225-83 / SGSC4696).